Reading from the N-terminus, the 137-residue chain is Peptide methionine sulfoxide reductase MsrB (137 aa).

One can recognise a MsrB domain in the interval 7-129 (AEELKKNLSE…NSASLRFTDG (123 aa)). Zn(2+)-binding residues include cysteine 46, cysteine 49, cysteine 95, and cysteine 98. The active-site Nucleophile is cysteine 118.

The protein belongs to the MsrB Met sulfoxide reductase family. The cofactor is Zn(2+).

The catalysed reaction is L-methionyl-[protein] + [thioredoxin]-disulfide + H2O = L-methionyl-(R)-S-oxide-[protein] + [thioredoxin]-dithiol. This Escherichia coli O8 (strain IAI1) protein is Peptide methionine sulfoxide reductase MsrB.